The primary structure comprises 152 residues: UPF0266 membrane protein ESA_01432 (152 aa).

Helical transmembrane passes span 1 to 21 (MTLTDGVLVIFIIALLGWAIY), 45 to 65 (ADSLIFTGLVAILIWQNVASH), and 67 to 87 (ALLTTWLLGALGLLAIYLFWI).

It belongs to the UPF0266 family.

The protein localises to the cell inner membrane. The sequence is that of UPF0266 membrane protein ESA_01432 from Cronobacter sakazakii (strain ATCC BAA-894) (Enterobacter sakazakii).